The sequence spans 87 residues: Small ribosomal subunit protein uS15c (87 aa).

It belongs to the universal ribosomal protein uS15 family. In terms of assembly, part of the 30S ribosomal subunit.

The protein localises to the plastid. It localises to the chloroplast. The polypeptide is Small ribosomal subunit protein uS15c (rps15) (Solanum lycopersicum (Tomato)).